The sequence spans 208 residues: Small ribosomal subunit protein uS4 (208 aa).

The 61-residue stretch at Arg98 to Lys158 folds into the S4 RNA-binding domain.

Belongs to the universal ribosomal protein uS4 family. In terms of assembly, part of the 30S ribosomal subunit. Contacts protein S5. The interaction surface between S4 and S5 is involved in control of translational fidelity.

Functionally, one of the primary rRNA binding proteins, it binds directly to 16S rRNA where it nucleates assembly of the body of the 30S subunit. In terms of biological role, with S5 and S12 plays an important role in translational accuracy. In Magnetococcus marinus (strain ATCC BAA-1437 / JCM 17883 / MC-1), this protein is Small ribosomal subunit protein uS4.